A 132-amino-acid chain; its full sequence is Small ribosomal subunit protein uS11 (132 aa).

Residues 110–132 (IEDVTPVPSDSTRRKGGRRGRRL) are disordered. Over residues 123-132 (RKGGRRGRRL) the composition is skewed to basic residues.

It belongs to the universal ribosomal protein uS11 family. Component of the small ribosomal subunit. Mature ribosomes consist of a small (40S) and a large (60S) subunit. The 40S subunit contains about 32 different proteins and 1 molecule of RNA (18S). The 60S subunit contains 45 different proteins and 3 molecules of RNA (25S, 5.8S and 5S).

It is found in the cytoplasm. Its function is as follows. Component of the ribosome, a large ribonucleoprotein complex responsible for the synthesis of proteins in the cell. The small ribosomal subunit (SSU) binds messenger RNAs (mRNAs) and translates the encoded message by selecting cognate aminoacyl-transfer RNA (tRNA) molecules. The large subunit (LSU) contains the ribosomal catalytic site termed the peptidyl transferase center (PTC), which catalyzes the formation of peptide bonds, thereby polymerizing the amino acids delivered by tRNAs into a polypeptide chain. The nascent polypeptides leave the ribosome through a tunnel in the LSU and interact with protein factors that function in enzymatic processing, targeting, and the membrane insertion of nascent chains at the exit of the ribosomal tunnel. RPS14B is involved in nucleolar processing of pre-18S ribosomal RNA and ribosome assembly. The protein is Small ribosomal subunit protein uS11 (RPS14B) of Candida albicans (strain SC5314 / ATCC MYA-2876) (Yeast).